The chain runs to 331 residues: Hydroxysteroid dehydrogenase-like protein 1 (331 aa).

The required for mitochondria translocation stretch occupies residues 2 to 82 (AAVDRFNLLY…TGSTDGIGKA (81 aa)). Residues 74-80 (GSTDGIG) and Asp125 contribute to the NADP(+) site. Residue Ser205 coordinates substrate. Catalysis depends on Tyr218, which acts as the Proton acceptor. Lys222 is an NADP(+) binding site.

Belongs to the short-chain dehydrogenases/reductases (SDR) family. 17-beta-HSD 3 subfamily.

Its subcellular location is the mitochondrion. Its function is as follows. May catalyze the metabolism of steroid hormones and thus play an important role in sex differentiation, the emergence and maintenance of the secondary sexual characters, and the regulation of endocrine. This chain is Hydroxysteroid dehydrogenase-like protein 1 (HSDL1), found in Gallus gallus (Chicken).